The following is a 37-amino-acid chain: Large ribosomal subunit protein bL36 (37 aa).

It belongs to the bacterial ribosomal protein bL36 family.

The sequence is that of Large ribosomal subunit protein bL36 from Staphylococcus aureus (strain Mu3 / ATCC 700698).